The primary structure comprises 594 residues: Aspartate--tRNA(Asp/Asn) ligase (594 aa).

Position 175 (Glu-175) interacts with L-aspartate. The tract at residues 199–202 (QQLK) is aspartate. L-aspartate is bound at residue Arg-221. Residues 221–223 (RDE) and Gln-230 each bind ATP. His-450 serves as a coordination point for L-aspartate. Glu-485 is an ATP binding site. Arg-492 serves as a coordination point for L-aspartate. 537 to 540 (GIDR) is a binding site for ATP.

This sequence belongs to the class-II aminoacyl-tRNA synthetase family. Type 1 subfamily. In terms of assembly, homodimer.

It is found in the cytoplasm. It carries out the reaction tRNA(Asx) + L-aspartate + ATP = L-aspartyl-tRNA(Asx) + AMP + diphosphate. Functionally, aspartyl-tRNA synthetase with relaxed tRNA specificity since it is able to aspartylate not only its cognate tRNA(Asp) but also tRNA(Asn). Reaction proceeds in two steps: L-aspartate is first activated by ATP to form Asp-AMP and then transferred to the acceptor end of tRNA(Asp/Asn). The sequence is that of Aspartate--tRNA(Asp/Asn) ligase from Herpetosiphon aurantiacus (strain ATCC 23779 / DSM 785 / 114-95).